The sequence spans 722 residues: Biotin--protein ligase (722 aa).

Residues 27–93 (KELGKASDKQ…EPAADGDPGL (67 aa)) form a disordered region. Over residues 46–55 (ASPEAQPAQG) the composition is skewed to low complexity. Residue Ser-295 is modified to Phosphoserine. The region spanning 459-648 (TRLGKVILFA…VLEKLIDRFQ (190 aa)) is the BPL/LPL catalytic domain.

It belongs to the biotin--protein ligase family. As to quaternary structure, monomer.

The protein localises to the cytoplasm. The protein resides in the mitochondrion. The enzyme catalyses apo-[methylmalonyl-CoA:pyruvate carboxytransferase] + biotin + ATP = holo-[methylmalonyl-CoA:pyruvate carboxytransferase] + AMP + diphosphate + H(+). It carries out the reaction apo-[propionyl-CoA:carbon-dioxide ligase (ADP-forming)] + biotin + ATP = holo-[propionyl-CoA:carbon-dioxide ligase (ADP-forming)] + AMP + diphosphate + H(+). The catalysed reaction is apo-[3-methylcrotonoyl-CoA:carbon-dioxide ligase (ADP-forming)] + biotin + ATP = holo-[3-methylcrotonoyl-CoA:carbon-dioxide ligase (ADP-forming)] + AMP + diphosphate + H(+). It catalyses the reaction biotin + L-lysyl-[protein] + ATP = N(6)-biotinyl-L-lysyl-[protein] + AMP + diphosphate + H(+). Its function is as follows. Biotin--protein ligase catalyzing the biotinylation of the 4 biotin-dependent carboxylases acetyl-CoA-carboxylase, pyruvate carboxylase, propionyl-CoA carboxylase, and methylcrotonyl-CoA carboxylase. The chain is Biotin--protein ligase from Mus musculus (Mouse).